The primary structure comprises 800 residues: Calmodulin-sensitive adenylate cyclase (800 aa).

The signal sequence occupies residues 1 to 33 (MTRNKFIPNKFSIISFSVLLFAISSSQAIEVNA). Positions 60 to 273 (KDSINNLVKT…MFEYMNKLEK (214 aa)) constitute an ATLF-like domain. Residues 294–349 (DVLKGEKALKASGLVPEHADAFKKIARELNTYILFRPVNKLATNLIKSGVATKGLN) form a catalytic CA1 region. A catalytic CB region spans residues 350–489 (VHGKSSDWGP…NVEGVLKPLT (140 aa)). H351 serves as the catalytic Proton acceptor. The interval 490 to 622 (ADYDLFALAP…RFIEKNITGK (133 aa)) is catalytic CA2. The Mg(2+) site is built by D491 and D493. Residues T548 and 577–579 (HGT) each bind 3',5'-cyclic AMP. H577 lines the Mg(2+) pocket. The interval 623-800 (DYLYYFNRSY…EVFQKIIDEK (178 aa)) is interaction with calmodulin.

The protein belongs to the adenylyl cyclase class-2 family. In terms of assembly, interacts (via ATLF domain) with the cleaved form of protective antigen (PA-63) anthrax toxin; interaction is required for EF translocation into the host cytoplasm. It depends on Ca(2+) as a cofactor.

It localises to the secreted. The protein localises to the host cytoplasm. The protein resides in the host cytosol. The catalysed reaction is ATP = 3',5'-cyclic AMP + diphosphate. Host calmodulin is an absolute requirement for its activation. Inhibited by ethyl 5-aminopyrazolo[1,5-a]quinazoline-3-carboxylate. In terms of biological role, edema factor (EF), which constitutes one of the three proteins composing the anthrax toxin, causes edema in the host. Acts as a calmodulin-dependent adenylyl cyclase by converting ATP to cAMP, leading to dramatic elevation of intracellular cAMP levels in the host, thereby causing edema. EF is not toxic by itself and only acts as an edema factor when associated with protective antigen (PA) to form the edema toxin (EdTx). Required for the survival of germinated spores within macrophages at the early stages of infection. This Bacillus anthracis protein is Calmodulin-sensitive adenylate cyclase (cya).